Consider the following 208-residue polypeptide: RNA chaperone ProQ (208 aa).

Over residues 106-127 the composition is skewed to basic and acidic residues; it reads SKAKVATRRKEQAKKAREEAKA. Positions 106–154 are disordered; that stretch reads SKAKVATRRKEQAKKAREEAKAKKTARAATPPKRRPQPAAKKVEQPVET.

It belongs to the ProQ family.

Its subcellular location is the cytoplasm. Functionally, RNA chaperone with significant RNA binding, RNA strand exchange and RNA duplexing activities. The sequence is that of RNA chaperone ProQ from Aliivibrio fischeri (strain ATCC 700601 / ES114) (Vibrio fischeri).